We begin with the raw amino-acid sequence, 205 residues long: Thymidylate kinase (205 aa).

10-17 is a binding site for ATP; sequence GIDGAGKS.

The protein belongs to the thymidylate kinase family.

The enzyme catalyses dTMP + ATP = dTDP + ADP. Functionally, phosphorylation of dTMP to form dTDP in both de novo and salvage pathways of dTTP synthesis. This Ralstonia pickettii (strain 12J) protein is Thymidylate kinase.